Here is a 414-residue protein sequence, read N- to C-terminus: Probable indole-3-pyruvate monooxygenase YUCCA1 (414 aa).

G25 to G30 is a binding site for FAD. Residue G189–G194 participates in NADP(+) binding.

The protein belongs to the FMO family. FAD serves as cofactor. In terms of tissue distribution, expressed in the apical meristems and young floral primordia. Detected in the floral meristems and at the base of the floral organs.

It catalyses the reaction indole-3-pyruvate + NADPH + O2 + H(+) = (indol-3-yl)acetate + CO2 + NADP(+) + H2O. The protein operates within plant hormone metabolism; auxin biosynthesis. Involved in auxin biosynthesis, but not in the tryptamine or the CYP79B2/B3 branches. Catalyzes in vitro the N-oxidation of tryptamine to form N-hydroxyl tryptamine. Involved during embryogenesis and seedling development. Required for the formation of floral organs and vascular tissues. Belongs to the set of redundant YUCCA genes probably responsible for auxin biosynthesis in shoots. This Arabidopsis thaliana (Mouse-ear cress) protein is Probable indole-3-pyruvate monooxygenase YUCCA1 (YUC1).